The chain runs to 97 residues: MNQERIYKVLLGPHVSEKASLAAERGQVVFRVAPDATKPEIKKAVEQLFNVTVEGVQVLNRKGKLKRTIRGFGKRNDIRKAYVKLAEGQDIDFLDVE.

This sequence belongs to the universal ribosomal protein uL23 family. Part of the 50S ribosomal subunit. Contacts protein L29, and trigger factor when it is bound to the ribosome.

Its function is as follows. One of the early assembly proteins it binds 23S rRNA. One of the proteins that surrounds the polypeptide exit tunnel on the outside of the ribosome. Forms the main docking site for trigger factor binding to the ribosome. In Marinobacter nauticus (strain ATCC 700491 / DSM 11845 / VT8) (Marinobacter aquaeolei), this protein is Large ribosomal subunit protein uL23.